The chain runs to 450 residues: MGKYFGTDGVRGVANSELTPELAFRLGRMGGYVLTRHVGEHPRVLVARDTRISGEMLESALIAGLVSVGIEVMRLGVISTPGVAYLTKAQGASASVMISASHNPVDDNGIKFFGSDGFKLSDDQEEEIEQLLDTAEDTLPRPSGEGLGTVSDYFEGKQKYIQYLKQTIENDFNGYHIALDCANGATSGLATHLFADLDADISSMGASPNGLNINDGVGSTHPEALAAFVLDKKADVGLAFDGDGDRVIAIDEIGQIVDGDKIMFICAKYLREQGLLNNNTIVSTVMSNLGFYKGLKELEIEDVQTAVGDRYVVEAMREGNYNLGGEQSGHIIFLDHNTTGDGLLSGIQLINVMKATGKKLSELAAEMKTFPQKLENIRVSDKNHVTDNPKVSKVIGEVEAEMAGNGRVLVRPSGTEPLVRVMVEAATKEETDEYCERISAVVRSEMALND.

The Phosphoserine intermediate role is filled by Ser101. Mg(2+) contacts are provided by Ser101, Asp241, Asp243, and Asp245. Ser101 carries the phosphoserine modification.

Belongs to the phosphohexose mutase family. Mg(2+) is required as a cofactor. In terms of processing, activated by phosphorylation.

The catalysed reaction is alpha-D-glucosamine 1-phosphate = D-glucosamine 6-phosphate. Functionally, catalyzes the conversion of glucosamine-6-phosphate to glucosamine-1-phosphate. This chain is Phosphoglucosamine mutase, found in Listeria monocytogenes serotype 4b (strain F2365).